Consider the following 214-residue polypeptide: uncharacterized protein (214 aa).

Helical transmembrane passes span 43 to 63 (IQKP…AAHI), 84 to 104 (IEWA…IPVI), 116 to 136 (ALVI…EYFI), and 150 to 170 (PVTR…FGIF).

The protein localises to the host membrane. This is an uncharacterized protein from Citrus leprosis virus C (isolate Citrus sinesis/Brazil/Cordeiropolis/2003) (CiLV-C).